We begin with the raw amino-acid sequence, 216 residues long: RNA pyrophosphohydrolase (216 aa).

In terms of domain architecture, Nudix hydrolase spans 6–149; the sequence is GFRPNVGIIL…KRDVYQLALT (144 aa). The short motif at 38 to 59 is the Nudix box element; that stretch reads GGIKYGETPMQAMYRELHEETG.

The protein belongs to the Nudix hydrolase family. RppH subfamily. A divalent metal cation serves as cofactor.

In terms of biological role, accelerates the degradation of transcripts by removing pyrophosphate from the 5'-end of triphosphorylated RNA, leading to a more labile monophosphorylated state that can stimulate subsequent ribonuclease cleavage. The sequence is that of RNA pyrophosphohydrolase from Burkholderia ambifaria (strain MC40-6).